The following is a 761-amino-acid chain: BMP/retinoic acid-inducible neural-specific protein 1 (761 aa).

An N-terminal signal peptide occupies residues 1–22 (MNWRLVEFLYLLFIWDHILVQP). One can recognise an MACPF domain in the interval 68 to 251 (RYKIYREFAR…FVQSALSYIM (184 aa)). 7 N-linked (GlcNAc...) asparagine glycosylation sites follow: Asn156, Asn433, Asn443, Asn553, Asn599, Asn631, and Asn677.

Belongs to the BRINP family.

The protein resides in the cytoplasm. In terms of biological role, plays a role in neurogenesis and brain development. May suppress cell cycle progression in postmitotic neurons by inhibiting G1/S transition. The sequence is that of BMP/retinoic acid-inducible neural-specific protein 1 (BRINP1) from Gallus gallus (Chicken).